A 163-amino-acid chain; its full sequence is Arginine repressor (163 aa).

This sequence belongs to the ArgR family.

The protein localises to the cytoplasm. The protein operates within amino-acid biosynthesis; L-arginine biosynthesis [regulation]. Its function is as follows. Regulates arginine biosynthesis genes. This chain is Arginine repressor, found in Anaeromyxobacter dehalogenans (strain 2CP-C).